Reading from the N-terminus, the 493-residue chain is Vinyl phenol reductase (493 aa).

FAD contacts are provided by alanine 19, glutamate 38, serine 46, threonine 50, glycine 52, alanine 156, aspartate 224, asparagine 448, and valine 467.

This sequence belongs to the FAD-dependent oxidoreductase 2 family. FRD/SDH subfamily. FAD serves as cofactor.

It catalyses the reaction 4-vinylphenol + NADH + H(+) = 4-ethylphenol + NAD(+). It carries out the reaction 3,4-dihydroxystyrene + NADH + H(+) = 4-ethylcatechol + NAD(+). The catalysed reaction is 2-methoxy-4-vinylphenol + NADH + H(+) = 4-ethyl-2-methoxyphenol + NAD(+). Its function is as follows. Involved in the production of ethylphenols during the degradation of hydroxycinnamic acids. Catalyzes the reduction of vinylphenols (4-vinylphenol (4-hydroxystyrene), 4-vinylcatechol (3,4-dihydroxystyrene), and 4-vinylguaiacol (2-methoxy-4-vinylphenol)) to their corresponding ethylphenols (4-ethylphenol, 4-ethylcatechol, and 4-ethylguaiacol, respectively) in the presence of NADH. These compounds are considered the most important flavor components of fermented soy sauce, and, on the other hand, are considered off flavor and responsible for sensorial wine and cider alteration. The 4-ethylphenol produced by the gut bacteria L.plantarum strain WCFS1 can get subsequent sulfation to 4-ethylphenyl sulfate (4EPS) by host sulfotransferase (SULT1A1); 4EPS can enter the brain and seems to alter brain activity. Therefore, this enzyme likely plays a role in gut microbiota-host metabolic interactions. The sequence is that of Vinyl phenol reductase from Lactiplantibacillus plantarum (strain ATCC BAA-793 / NCIMB 8826 / WCFS1) (Lactobacillus plantarum).